A 132-amino-acid polypeptide reads, in one-letter code: Small ribosomal subunit protein uS8 (132 aa).

It belongs to the universal ribosomal protein uS8 family. As to quaternary structure, part of the 30S ribosomal subunit. Contacts proteins S5 and S12.

Functionally, one of the primary rRNA binding proteins, it binds directly to 16S rRNA central domain where it helps coordinate assembly of the platform of the 30S subunit. In Streptomyces coelicolor (strain ATCC BAA-471 / A3(2) / M145), this protein is Small ribosomal subunit protein uS8.